The sequence spans 639 residues: UvrABC system protein C (639 aa).

The region spanning 31-109 is the GIY-YIG domain; the sequence is EQAGVYRMYD…IKKYQPKYNI (79 aa). The 36-residue stretch at 218–253 folds into the UVR domain; sequence SAVIEQLVARMELASNELHFELAAKYRDQIVTLRKV.

This sequence belongs to the UvrC family. As to quaternary structure, interacts with UvrB in an incision complex.

The protein localises to the cytoplasm. Its function is as follows. The UvrABC repair system catalyzes the recognition and processing of DNA lesions. UvrC both incises the 5' and 3' sides of the lesion. The N-terminal half is responsible for the 3' incision and the C-terminal half is responsible for the 5' incision. The sequence is that of UvrABC system protein C from Colwellia psychrerythraea (strain 34H / ATCC BAA-681) (Vibrio psychroerythus).